A 388-amino-acid chain; its full sequence is MFSLRTAQPAQSLFRAATNTYSTSLPRSAIAARSFATVQSDIFKPTKYGGKYTVTLIPGDGIGTEVAESVKTIFKADNVPIEWEQVDVSGLDAGNKHSEDLFKESIASLKRNKLGLKGILHTPVERSGHQSFNVALRQELDIYASIVLIKNIPGYKTRHDNVDLCIIRENTEGEYSGLEHQSVSGVVESLKIITRAKSERIAKFAFSFALANNRKKVTCIHKANIMKLADGLFRSTFHKVAESYPTLETNDMIVDNASMQAVARPQQFDVMVMPNLYGGILSNVGAALVGGPGIVPGCNMGRDVAVFEPGCRHVGLDIKGKDQANPTALILSGSMLLRHLGLDEHANRISKAVYDVIGEGVTRTRDMGGQASTHEFTRAVLDKMESAL.

The N-terminal 35 residues, 1-35 (MFSLRTAQPAQSLFRAATNTYSTSLPRSAIAARSF), are a transit peptide targeting the mitochondrion. Residues Arg-137, Arg-168, and Asp-255 each contribute to the substrate site. Residue Asp-255 coordinates Mg(2+).

It belongs to the isocitrate and isopropylmalate dehydrogenases family. In terms of assembly, octamer of two non-identical subunits IDH1 and IDH2. Mg(2+) is required as a cofactor. Requires Mn(2+) as cofactor.

The protein localises to the mitochondrion. It carries out the reaction D-threo-isocitrate + NAD(+) = 2-oxoglutarate + CO2 + NADH. Performs an essential role in the oxidative function of the citric acid cycle. The chain is Isocitrate dehydrogenase [NAD] subunit 1, mitochondrial (IDH1) from Ajellomyces capsulatus (Darling's disease fungus).